Here is a 424-residue protein sequence, read N- to C-terminus: Serine hydroxymethyltransferase (424 aa).

Residues leucine 119 and 123–125 contribute to the (6S)-5,6,7,8-tetrahydrofolate site; that span reads GHL. Lysine 228 bears the N6-(pyridoxal phosphate)lysine mark. 353 to 355 serves as a coordination point for (6S)-5,6,7,8-tetrahydrofolate; sequence SAF.

It belongs to the SHMT family. In terms of assembly, homodimer. Pyridoxal 5'-phosphate is required as a cofactor.

The protein resides in the cytoplasm. It carries out the reaction (6R)-5,10-methylene-5,6,7,8-tetrahydrofolate + glycine + H2O = (6S)-5,6,7,8-tetrahydrofolate + L-serine. Its pathway is one-carbon metabolism; tetrahydrofolate interconversion. The protein operates within amino-acid biosynthesis; glycine biosynthesis; glycine from L-serine: step 1/1. In terms of biological role, catalyzes the reversible interconversion of serine and glycine with tetrahydrofolate (THF) serving as the one-carbon carrier. Also exhibits THF-independent aldolase activity toward beta-hydroxyamino acids, producing glycine and aldehydes, via a retro-aldol mechanism. The chain is Serine hydroxymethyltransferase from Natronomonas pharaonis (strain ATCC 35678 / DSM 2160 / CIP 103997 / JCM 8858 / NBRC 14720 / NCIMB 2260 / Gabara) (Halobacterium pharaonis).